The sequence spans 338 residues: Ketol-acid reductoisomerase (NADP(+)) (338 aa).

A KARI N-terminal Rossmann domain is found at 1–181 (MKVYYDKDCD…GGGRTGIIET (181 aa)). Residues 24 to 27 (YGSQ), arginine 47, serine 50, serine 52, and 82 to 85 (DEFQ) each bind NADP(+). The active site involves histidine 107. Glycine 133 contributes to the NADP(+) binding site. The 146-residue stretch at 182–327 (TFKDETETDL…EKLRTMMPWI (146 aa)) folds into the KARI C-terminal knotted domain. The Mg(2+) site is built by aspartate 190, glutamate 194, glutamate 226, and glutamate 230. A substrate-binding site is contributed by serine 251.

The protein belongs to the ketol-acid reductoisomerase family. Requires Mg(2+) as cofactor.

The catalysed reaction is (2R)-2,3-dihydroxy-3-methylbutanoate + NADP(+) = (2S)-2-acetolactate + NADPH + H(+). The enzyme catalyses (2R,3R)-2,3-dihydroxy-3-methylpentanoate + NADP(+) = (S)-2-ethyl-2-hydroxy-3-oxobutanoate + NADPH + H(+). It participates in amino-acid biosynthesis; L-isoleucine biosynthesis; L-isoleucine from 2-oxobutanoate: step 2/4. The protein operates within amino-acid biosynthesis; L-valine biosynthesis; L-valine from pyruvate: step 2/4. Its function is as follows. Involved in the biosynthesis of branched-chain amino acids (BCAA). Catalyzes an alkyl-migration followed by a ketol-acid reduction of (S)-2-acetolactate (S2AL) to yield (R)-2,3-dihydroxy-isovalerate. In the isomerase reaction, S2AL is rearranged via a Mg-dependent methyl migration to produce 3-hydroxy-3-methyl-2-ketobutyrate (HMKB). In the reductase reaction, this 2-ketoacid undergoes a metal-dependent reduction by NADPH to yield (R)-2,3-dihydroxy-isovalerate. The protein is Ketol-acid reductoisomerase (NADP(+)) of Azotobacter vinelandii (strain DJ / ATCC BAA-1303).